Consider the following 449-residue polypeptide: Naphthalene 1,2-dioxygenase system, large oxygenase component (449 aa).

A Rieske domain is found at 39 to 137 (WLFLTHDSLI…LDKKCMGLKE (99 aa)). [2Fe-2S] cluster-binding residues include Cys-81, His-83, Cys-101, and His-104. Residues His-208, His-213, and Asp-362 each contribute to the Fe cation site.

The protein belongs to the bacterial ring-hydroxylating dioxygenase alpha subunit family. In terms of assembly, the naphthalene dioxygenase (NDO) multicomponent enzyme system is composed of an electron transfer component and a dioxygenase component (iron sulfur protein (ISP)). The electron transfer component is composed of a ferredoxin reductase (NdoR) and a ferredoxin (NdoA), and the dioxygenase component is formed of a heterohexamer (trimer of heterodimers) of three large alpha subunits (NdoB) and three small beta subunits (NdoC). The cofactor is [2Fe-2S] cluster. It depends on Fe(2+) as a cofactor.

The enzyme catalyses naphthalene + NADH + O2 + H(+) = (1R,2S)-1,2-dihydronaphthalene-1,2-diol + NAD(+). It functions in the pathway aromatic compound metabolism; naphthalene degradation. Functionally, component of the naphthalene dioxygenase (NDO) multicomponent enzyme system which catalyzes the incorporation of both atoms of molecular oxygen into naphthalene to form cis-(1R,2S)-dihydroxy-1,2-dihydronaphthalene. The alpha subunit has a catalytic role in the holoenzyme. The sequence is that of Naphthalene 1,2-dioxygenase system, large oxygenase component from Pseudomonas aeruginosa.